Consider the following 342-residue polypeptide: MSEAIKTDVLIIGAGPCGLFAVFELGLLDIKAHLIDILDKVGGQCAELYPEKPIYDIPGVPMVTGQGLTDQLMEQIKPFSPTFHLGEMVSNVEKIGDPGFRVTTDAGKVFECKVVVIAAGGGSFQPKRPPVPGIEAYEGTSVFYAVRKMEQFRGKNVVIVGGGDSALDWTLNLHPIAKRIALIHRRDDFRAAPHSVEQMRALVASGKMDLRIGQVTALEGTNGQLSAATIKGNDNAVETIPCEMMLPFFGLTMKLGPVADWGIALEHNLIPVETSAFETSVPGIFAIGDINTYPGKIKLILCGFHEGALMAQKAHRYVYPEKRLVFQYTTSSSSLQKKLGVN.

FAD-binding residues include Cys17, Asp36, Gln44, Tyr49, Val89, Phe124, Asp289, and Thr330.

Belongs to the ferredoxin--NADP reductase type 2 family. As to quaternary structure, homodimer. Requires FAD as cofactor.

The enzyme catalyses 2 reduced [2Fe-2S]-[ferredoxin] + NADP(+) + H(+) = 2 oxidized [2Fe-2S]-[ferredoxin] + NADPH. The chain is Ferredoxin--NADP reductase from Bradyrhizobium sp. (strain ORS 278).